We begin with the raw amino-acid sequence, 1105 residues long: AP-3 complex subunit beta-1 (1105 aa).

Disordered regions lie at residues 1–26 (MSSN…EATS) and 271–292 (KNFY…KKSY). A phosphoserine mark is found at serine 276 and serine 610. The tract at residues 668–824 (KKEKPMKKFY…KPQQERHPPS (157 aa)) is disordered. Acidic residues predominate over residues 679–704 (ESEEEEDEDEDEDEEEEEKEDEDENP). 2 stretches are compositionally biased toward low complexity: residues 705 to 722 (SDSS…SGDT) and 730 to 741 (DSSSGQDSETGS). Residues 750–759 (VAKRNSKTKR) are compositionally biased toward basic residues. Residues 760–774 (KSDSENREKKNENSK) are compositionally biased toward basic and acidic residues. Serine 761 and serine 763 each carry phosphoserine. A compositionally biased stretch (low complexity) spans 775–788 (ASESSSEESSSMED). A compositionally biased stretch (acidic residues) spans 789 to 799 (SSSESESESGS). Over residues 811 to 824 (AKERKPQQERHPPS) the composition is skewed to basic and acidic residues.

This sequence belongs to the adaptor complexes large subunit family. Adaptor protein complex 3 (AP-3) is a heterotetramer composed of two large adaptins (delta-type subunit AP3D1 and beta-type subunit AP3B1 or AP3B2), a medium adaptin (mu-type subunit AP3M1 or AP3M2) and a small adaptin (sigma-type subunit APS1 or AP3S2). AP-3 associates with the BLOC-1 complex. Interacts with KIF3A; interaction is direct; interaction is impaired by pyrophosphorylation of AP3B1. Phosphorylated on serine residues. In terms of processing, pyrophosphorylated by 5-diphosphoinositol pentakisphosphate (5-IP7). Pyrophosphorylation impairs interaction with KIF3A. Serine pyrophosphorylation is achieved by Mg(2+)-dependent, but enzyme independent transfer of a beta-phosphate from a inositol pyrophosphate to a pre-phosphorylated serine residue. Ubiquitously expressed.

The protein resides in the cytoplasmic vesicle. Its subcellular location is the clathrin-coated vesicle membrane. The protein localises to the golgi apparatus. Its function is as follows. Subunit of non-clathrin- and clathrin-associated adaptor protein complex 3 (AP-3) that plays a role in protein sorting in the late-Golgi/trans-Golgi network (TGN) and/or endosomes. The AP complexes mediate both the recruitment of clathrin to membranes and the recognition of sorting signals within the cytosolic tails of transmembrane cargo molecules. AP-3 appears to be involved in the sorting of a subset of transmembrane proteins targeted to lysosomes and lysosome-related organelles. In concert with the BLOC-1 complex, AP-3 is required to target cargos into vesicles assembled at cell bodies for delivery into neurites and nerve terminals. This Mus musculus (Mouse) protein is AP-3 complex subunit beta-1 (Ap3b1).